The following is a 209-amino-acid chain: Thiamine-phosphate synthase (209 aa).

4-amino-2-methyl-5-(diphosphooxymethyl)pyrimidine contacts are provided by residues 41–45 and N73; that span reads QYRNK. D74 and D93 together coordinate Mg(2+). Residue S112 participates in 4-amino-2-methyl-5-(diphosphooxymethyl)pyrimidine binding. 139-141 contacts 2-[(2R,5Z)-2-carboxy-4-methylthiazol-5(2H)-ylidene]ethyl phosphate; that stretch reads SST. K142 is a binding site for 4-amino-2-methyl-5-(diphosphooxymethyl)pyrimidine. A 2-[(2R,5Z)-2-carboxy-4-methylthiazol-5(2H)-ylidene]ethyl phosphate-binding site is contributed by G168.

The protein belongs to the thiamine-phosphate synthase family. Mg(2+) is required as a cofactor.

It catalyses the reaction 2-[(2R,5Z)-2-carboxy-4-methylthiazol-5(2H)-ylidene]ethyl phosphate + 4-amino-2-methyl-5-(diphosphooxymethyl)pyrimidine + 2 H(+) = thiamine phosphate + CO2 + diphosphate. The catalysed reaction is 2-(2-carboxy-4-methylthiazol-5-yl)ethyl phosphate + 4-amino-2-methyl-5-(diphosphooxymethyl)pyrimidine + 2 H(+) = thiamine phosphate + CO2 + diphosphate. It carries out the reaction 4-methyl-5-(2-phosphooxyethyl)-thiazole + 4-amino-2-methyl-5-(diphosphooxymethyl)pyrimidine + H(+) = thiamine phosphate + diphosphate. The protein operates within cofactor biosynthesis; thiamine diphosphate biosynthesis; thiamine phosphate from 4-amino-2-methyl-5-diphosphomethylpyrimidine and 4-methyl-5-(2-phosphoethyl)-thiazole: step 1/1. Condenses 4-methyl-5-(beta-hydroxyethyl)thiazole monophosphate (THZ-P) and 2-methyl-4-amino-5-hydroxymethyl pyrimidine pyrophosphate (HMP-PP) to form thiamine monophosphate (TMP). The protein is Thiamine-phosphate synthase of Methylobacillus flagellatus (strain ATCC 51484 / DSM 6875 / VKM B-1610 / KT).